The chain runs to 424 residues: Cuticlin-1 (424 aa).

The signal sequence occupies residues 1–18; the sequence is MTWKPIICLAALVLSASA. At 19–392 the chain is on the extracellular side; it reads IPVDNNVEGE…ATSTGICLTP (374 aa). The ZP domain occupies 32–277; that stretch reads ECGPNSITVN…PTCSEPQGFG (246 aa). Cysteine 197 and cysteine 252 are oxidised to a cystine. Repeat copies occupy residues 302–305, 307–311, 312–315, and 320–323. The segment at 302–323 is 4 X 4 AA repeats of A-A-P-[AVI]; sequence AAPVAAAAPVAAPVAAAAAAPA. Residues 393–413 traverse the membrane as a helical segment; that stretch reads IGFASFLGIGTIVATALSATI. Topologically, residues 414-424 are cytoplasmic; the sequence is FYVARPTSHKH.

It is found in the cell membrane. The protein localises to the secreted. In terms of biological role, component of the cuticles, which contributes to the formation of extracellular envelopes protecting the organism from the environment. Plays a role in alae formation in dauer larvae. The sequence is that of Cuticlin-1 from Caenorhabditis elegans.